We begin with the raw amino-acid sequence, 69 residues long: Large ribosomal subunit protein bL31 (69 aa).

Residues cysteine 16, cysteine 18, cysteine 37, and cysteine 40 each coordinate Zn(2+).

It belongs to the bacterial ribosomal protein bL31 family. Type A subfamily. In terms of assembly, part of the 50S ribosomal subunit. Zn(2+) is required as a cofactor.

Binds the 23S rRNA. The protein is Large ribosomal subunit protein bL31 of Teredinibacter turnerae (strain ATCC 39867 / T7901).